Reading from the N-terminus, the 215-residue chain is 3-dehydroquinate dehydratase (215 aa).

3-dehydroquinate-binding positions include 27–29 (EVR) and arginine 54. The active-site Proton donor/acceptor is the histidine 112. The active-site Schiff-base intermediate with substrate is lysine 139. 3-dehydroquinate-binding residues include arginine 176 and glutamine 198.

The protein belongs to the type-I 3-dehydroquinase family. As to quaternary structure, homodimer.

The enzyme catalyses 3-dehydroquinate = 3-dehydroshikimate + H2O. The protein operates within metabolic intermediate biosynthesis; chorismate biosynthesis; chorismate from D-erythrose 4-phosphate and phosphoenolpyruvate: step 3/7. Its function is as follows. Involved in the third step of the chorismate pathway, which leads to the biosynthesis of aromatic amino acids. Catalyzes the cis-dehydration of 3-dehydroquinate (DHQ) and introduces the first double bond of the aromatic ring to yield 3-dehydroshikimate. The chain is 3-dehydroquinate dehydratase from Thermococcus onnurineus (strain NA1).